Consider the following 348-residue polypeptide: Dihydroorotase (348 aa).

Residues H17 and H19 each coordinate Zn(2+). Substrate is bound by residues H19–R21 and N45. Zn(2+) is bound by residues K103, H140, and H178. At K103 the chain carries N6-carboxylysine. Position 140 (H140) interacts with substrate. L223 provides a ligand contact to substrate. A Zn(2+)-binding site is contributed by D251. D251 is a catalytic residue. Substrate-binding residues include H255 and A267.

This sequence belongs to the metallo-dependent hydrolases superfamily. DHOase family. Class II DHOase subfamily. Homodimer. The cofactor is Zn(2+).

It carries out the reaction (S)-dihydroorotate + H2O = N-carbamoyl-L-aspartate + H(+). It functions in the pathway pyrimidine metabolism; UMP biosynthesis via de novo pathway; (S)-dihydroorotate from bicarbonate: step 3/3. Catalyzes the reversible cyclization of carbamoyl aspartate to dihydroorotate. The chain is Dihydroorotase from Escherichia fergusonii (strain ATCC 35469 / DSM 13698 / CCUG 18766 / IAM 14443 / JCM 21226 / LMG 7866 / NBRC 102419 / NCTC 12128 / CDC 0568-73).